We begin with the raw amino-acid sequence, 279 residues long: Protein phosphatase 1 regulatory subunit 3E (279 aa).

Serine 16 and serine 33 each carry phosphoserine. Residues 28–87 (RSQRPSLEEESEEEPGEGGTRPGARSRAHVPGRGRRARSAPAGGGGARTARSRSPDTRKR) form a disordered region. Residues 51-65 (ARSRAHVPGRGRRAR) show a composition bias toward basic residues. A Phosphoserine modification is found at serine 66. Positions 87–90 (RVRF) match the PP1-binding motif motif. The CBM21 domain maps to 154-259 (AARLQAQRIC…NNGGRDYALL (106 aa)). A glycogen-binding motif region spans residues 176 to 198 (GSARVLDLAYEKRVSVRWSADGW). Residues 248–256 (WDNNGGRDY) form a substrate-binding motif region.

Functionally, acts as a glycogen-targeting subunit for PP1. PP1 is involved in glycogen metabolism and contributes to the activation of glycogen synthase leading to an increase in glycogen synthesis. This chain is Protein phosphatase 1 regulatory subunit 3E (Ppp1r3e), found in Mus musculus (Mouse).